Here is a 316-residue protein sequence, read N- to C-terminus: UDP-N-acetylenolpyruvoylglucosamine reductase (316 aa).

The region spanning 27–225 (VGGKAERFYR…KTAINALLKK (199 aa)) is the FAD-binding PCMH-type domain. Arg190 is an active-site residue. Ser239 acts as the Proton donor in catalysis. Residue Glu309 is part of the active site.

Belongs to the MurB family. FAD serves as cofactor.

Its subcellular location is the cytoplasm. It catalyses the reaction UDP-N-acetyl-alpha-D-muramate + NADP(+) = UDP-N-acetyl-3-O-(1-carboxyvinyl)-alpha-D-glucosamine + NADPH + H(+). Its pathway is cell wall biogenesis; peptidoglycan biosynthesis. In terms of biological role, cell wall formation. The sequence is that of UDP-N-acetylenolpyruvoylglucosamine reductase from Coxiella burnetii (strain Dugway 5J108-111).